The following is a 918-amino-acid chain: UPF0182 protein CPR_0011 (918 aa).

The next 7 membrane-spanning stretches (helical) occupy residues threonine 8–isoleucine 28, leucine 46–isoleucine 66, phenylalanine 91–tryptophan 111, alanine 151–phenylalanine 171, leucine 200–tyrosine 220, isoleucine 243–isoleucine 263, and isoleucine 271–phenylalanine 291.

Belongs to the UPF0182 family.

It is found in the cell membrane. The chain is UPF0182 protein CPR_0011 from Clostridium perfringens (strain SM101 / Type A).